The following is a 166-amino-acid chain: Regulator of ribonuclease activity A (166 aa).

This sequence belongs to the RraA family. Homotrimer. Binds to both RNA-binding sites in the C-terminal region of Rne and to RhlB.

It is found in the cytoplasm. Its function is as follows. Globally modulates RNA abundance by binding to RNase E (Rne) and regulating its endonucleolytic activity. Can modulate Rne action in a substrate-dependent manner by altering the composition of the degradosome. Modulates RNA-binding and helicase activities of the degradosome. The protein is Regulator of ribonuclease activity A of Glaesserella parasuis serovar 5 (strain SH0165) (Haemophilus parasuis).